The primary structure comprises 554 residues: CTP synthase (554 aa).

The interval 1 to 265 (MTPLIFVTGG…DELVIDQFKL (265 aa)) is amidoligase domain. A CTP-binding site is contributed by serine 13. Position 13 (serine 13) interacts with UTP. ATP-binding positions include 14–19 (SLGKGI) and aspartate 71. Mg(2+)-binding residues include aspartate 71 and glutamate 139. Residues 146-148 (DIE), 186-191 (KTKPTQ), and lysine 222 contribute to the CTP site. UTP is bound by residues 186–191 (KTKPTQ) and lysine 222. In terms of domain architecture, Glutamine amidotransferase type-1 spans 292 to 545 (TIAVVGKYVD…VRAAREKKAG (254 aa)). Glycine 353 is an L-glutamine binding site. Cysteine 380 functions as the Nucleophile; for glutamine hydrolysis in the catalytic mechanism. L-glutamine contacts are provided by residues 381-384 (YGMQ), glutamate 404, and arginine 471. Residues histidine 518 and glutamate 520 contribute to the active site.

This sequence belongs to the CTP synthase family. In terms of assembly, homotetramer.

It carries out the reaction UTP + L-glutamine + ATP + H2O = CTP + L-glutamate + ADP + phosphate + 2 H(+). The enzyme catalyses L-glutamine + H2O = L-glutamate + NH4(+). The catalysed reaction is UTP + NH4(+) + ATP = CTP + ADP + phosphate + 2 H(+). It functions in the pathway pyrimidine metabolism; CTP biosynthesis via de novo pathway; CTP from UDP: step 2/2. With respect to regulation, allosterically activated by GTP, when glutamine is the substrate; GTP has no effect on the reaction when ammonia is the substrate. The allosteric effector GTP functions by stabilizing the protein conformation that binds the tetrahedral intermediate(s) formed during glutamine hydrolysis. Inhibited by the product CTP, via allosteric rather than competitive inhibition. In terms of biological role, catalyzes the ATP-dependent amination of UTP to CTP with either L-glutamine or ammonia as the source of nitrogen. Regulates intracellular CTP levels through interactions with the four ribonucleotide triphosphates. The protein is CTP synthase of Xanthomonas campestris pv. campestris (strain 8004).